The primary structure comprises 586 residues: uncharacterized protein (586 aa).

2 disordered regions span residues 17 to 64 and 80 to 123; these read VRRT…ETEE and HSCS…GGAN. Positions 28-37 are enriched in polar residues; that stretch reads PSTSGSIAWT. Composition is skewed to low complexity over residues 38-52 and 80-91; these read SSESGSAHSSRVSSS and HSCSAATTSQQS. Positions 94-110 are enriched in basic and acidic residues; it reads QSKEHRIGGIKKEEKPI. Over residues 112–123 the composition is skewed to gly residues; the sequence is MGGGSSENGGAN. 12 helical membrane passes run 151–171, 191–211, 218–238, 243–263, 283–303, 317–337, 375–395, 413–433, 441–461, 466–486, 513–533, and 536–556; these read WVILVIFMFLSGSNGAQWIQY, WTSMIYMLTYILFFIPAAWLL, LSVLLGALGNCVGAWIKLLST, FWVTFVGQTIVGASQMFTLGI, LGVFGNQLGIAVGFVLPPLIV, TLFLGSAVLNTSILALVICFF, FVILFITYGINTGVFYAISTL, YVGLLIVVAGMAGSVVGGFIL, LTTIMIYLFSFVGMLSFTLTI, MVLVFINAALLGFFMTGYLPI, IFGIALTWLMGIVMHGFGTFT, and IIMSSCLVVGTILTCFIREDL.

It belongs to the major facilitator superfamily. Feline leukemia virus subgroup C receptor (TC 2.A.1.28.1) family.

The protein resides in the membrane. This is an uncharacterized protein from Caenorhabditis elegans.